A 522-amino-acid chain; its full sequence is Mediator of RNA polymerase II transcription subunit 1.2 (522 aa).

The stretch at 13–40 (LLEQRKNQELNIEHIDEEMRLEQVRQAA) forms a coiled coil.

This sequence belongs to the Mediator complex subunit 1 family. As to quaternary structure, component of the Mediator complex.

Its subcellular location is the nucleus. Functionally, component of the Mediator complex, a coactivator involved in the regulated transcription of nearly all RNA polymerase II-dependent genes. Mediator functions as a bridge to convey information from gene-specific regulatory proteins to the basal RNA polymerase II transcription machinery. Mediator is recruited to promoters by direct interactions with regulatory proteins and serves as a scaffold for the assembly of a functional preinitiation complex with RNA polymerase II and the general transcription factors. This Caenorhabditis elegans protein is Mediator of RNA polymerase II transcription subunit 1.2 (mdt-1.2).